Consider the following 460-residue polypeptide: Notoamide biosynthesis cluster transcriptional coactivator notR (460 aa).

The HTH iclR-type domain maps to 74–145; it reads LQDLARQVEI…EPMPNYVSHT (72 aa). Positions 107-126 form a DNA-binding region, H-T-H motif; it reads IQDLADLAGVPDIQLRRVIR. Residues 300–320 are disordered; sequence TRDFTPQPESSPRPGSASSRV.

It localises to the nucleus. Transcription factor that probably regulates the expression of the gene cluster that mediates the biosynthesis of notoamide, a fungal indole alkaloid that belongs to a family of natural products containing a characteristic bicyclo[2.2.2]diazaoctane core. The sequence is that of Notoamide biosynthesis cluster transcriptional coactivator notR from Aspergillus sp. (strain MF297-2).